The following is a 258-amino-acid chain: Alcohol dehydrogenase 2 (258 aa).

9–33 contributes to the NAD(+) binding site; the sequence is IFVGGLGFIGYEACKQLMAKNMASF. Residue serine 137 participates in substrate binding. Tyrosine 150 acts as the Proton acceptor in catalysis.

This sequence belongs to the short-chain dehydrogenases/reductases (SDR) family. Homodimer.

It catalyses the reaction a primary alcohol + NAD(+) = an aldehyde + NADH + H(+). The catalysed reaction is a secondary alcohol + NAD(+) = a ketone + NADH + H(+). The polypeptide is Alcohol dehydrogenase 2 (ADH2) (Ceratitis cosyra (Mango fruit fly)).